We begin with the raw amino-acid sequence, 44 residues long: Cytochrome b559 subunit beta (44 aa).

Residues 19-35 (WLAVHTLAVPTVFFVGA) traverse the membrane as a helical segment. A heme-binding site is contributed by His23.

This sequence belongs to the PsbE/PsbF family. Heterodimer of an alpha subunit and a beta subunit. PSII is composed of 1 copy each of membrane proteins PsbA, PsbB, PsbC, PsbD, PsbE, PsbF, PsbH, PsbI, PsbJ, PsbK, PsbL, PsbM, PsbT, PsbX, PsbY, PsbZ, Psb30/Ycf12, peripheral proteins PsbO, CyanoQ (PsbQ), PsbU, PsbV and a large number of cofactors. It forms dimeric complexes. The cofactor is heme b.

The protein localises to the cellular thylakoid membrane. Its function is as follows. This b-type cytochrome is tightly associated with the reaction center of photosystem II (PSII). PSII is a light-driven water:plastoquinone oxidoreductase that uses light energy to abstract electrons from H(2)O, generating O(2) and a proton gradient subsequently used for ATP formation. It consists of a core antenna complex that captures photons, and an electron transfer chain that converts photonic excitation into a charge separation. In Crocosphaera subtropica (strain ATCC 51142 / BH68) (Cyanothece sp. (strain ATCC 51142)), this protein is Cytochrome b559 subunit beta.